Consider the following 159-residue polypeptide: NADH-quinone oxidoreductase subunit B 2 (159 aa).

Positions 37, 38, 102, and 132 each coordinate [4Fe-4S] cluster.

This sequence belongs to the complex I 20 kDa subunit family. As to quaternary structure, NDH-1 is composed of 14 different subunits. Subunits NuoB, C, D, E, F, and G constitute the peripheral sector of the complex. [4Fe-4S] cluster serves as cofactor.

Its subcellular location is the cell inner membrane. The enzyme catalyses a quinone + NADH + 5 H(+)(in) = a quinol + NAD(+) + 4 H(+)(out). NDH-1 shuttles electrons from NADH, via FMN and iron-sulfur (Fe-S) centers, to quinones in the respiratory chain. Couples the redox reaction to proton translocation (for every two electrons transferred, four hydrogen ions are translocated across the cytoplasmic membrane), and thus conserves the redox energy in a proton gradient. This is NADH-quinone oxidoreductase subunit B 2 from Azoarcus sp. (strain BH72).